The following is a 239-amino-acid chain: Probable transcriptional regulatory protein EF_2866 (239 aa).

The protein belongs to the TACO1 family. YeeN subfamily.

The protein localises to the cytoplasm. The chain is Probable transcriptional regulatory protein EF_2866 from Enterococcus faecalis (strain ATCC 700802 / V583).